Consider the following 339-residue polypeptide: NADH-quinone oxidoreductase subunit H (339 aa).

The next 9 helical transmembrane spans lie at 10-30, 50-70, 82-102, 115-135, 155-175, 187-207, 235-255, 275-295, and 311-331; these read FPLTVIALKVVAITIPLILCV, PNVVGPFGLLQPIADAVKLLF, ILFILAPIITFVLSLIGWAVI, VGVLYILAISSLSVYGIIIAG, ISYEVSIGLVIVTVLLTTGTL, LPWWIDLMLLPMSIVFFISVL, MGFALFFLGEYANMILVSAMT, IPGFFWFVLKVMLLLFCFLWI, and GWKVFLPLTLFGVVLVSSVLF.

It belongs to the complex I subunit 1 family. In terms of assembly, NDH-1 is composed of 14 different subunits. Subunits NuoA, H, J, K, L, M, N constitute the membrane sector of the complex.

The protein resides in the cell inner membrane. The enzyme catalyses a quinone + NADH + 5 H(+)(in) = a quinol + NAD(+) + 4 H(+)(out). NDH-1 shuttles electrons from NADH, via FMN and iron-sulfur (Fe-S) centers, to quinones in the respiratory chain. The immediate electron acceptor for the enzyme in this species is believed to be ubiquinone. Couples the redox reaction to proton translocation (for every two electrons transferred, four hydrogen ions are translocated across the cytoplasmic membrane), and thus conserves the redox energy in a proton gradient. This subunit may bind ubiquinone. The polypeptide is NADH-quinone oxidoreductase subunit H (Rickettsia typhi (strain ATCC VR-144 / Wilmington)).